Reading from the N-terminus, the 152-residue chain is Orientotoxin-1 (152 aa).

In terms of tissue distribution, expressed by the venom gland.

Its subcellular location is the secreted. It catalyses the reaction a 1-acyl-sn-glycero-3-phosphocholine + H2O = sn-glycerol 3-phosphocholine + a fatty acid + H(+). In terms of biological role, neurotoxin of presynaptic effect which degrades lysophospholipids. The polypeptide is Orientotoxin-1 (Vespa orientalis (Oriental hornet)).